The chain runs to 496 residues: RNA-binding motif protein, Y chromosome, family 1 member A1 (496 aa).

Positions 8-85 (GKLFIGGLNR…KAIKVEQAKK (78 aa)) constitute an RRM domain. Disordered stretches follow at residues 78–349 (IKVE…HRDY) and 452–496 (KDQR…SSRY). Low complexity-rich tracts occupy residues 97–114 (PASSRNRSPSGSLRSARG) and 149–159 (PVKRGPSSRSG). The segment covering 175 to 184 (NSWMGSQGPM) has biased composition (polar residues). 6 stretches are compositionally biased toward basic and acidic residues: residues 204-214 (RNDRMSTRHDG), 242-253 (DNGHSNRDEHSS), 276-289 (AYRDYGHSRRDESY), 313-326 (GYRDYGHSRRHESY), 335-349 (SSRETRDYAPPHRDY), and 484-496 (GESRSEKGDSSRY).

Interacts with splicing factor proteins SFRS3/SRP20, TRA2B/SFRS10, KHDRBS1/SAM68 and KHDRBS3. In terms of tissue distribution, testis-specific.

Its subcellular location is the nucleus. Functionally, RNA-binding protein involved in pre-mRNA splicing. Required for sperm development. Acts additively with TRA2B to promote exon 7 inclusion of the survival motor neuron SMN. Binds non-specifically to mRNAs. This Homo sapiens (Human) protein is RNA-binding motif protein, Y chromosome, family 1 member A1 (RBMY1A1).